Here is a 784-residue protein sequence, read N- to C-terminus: E3 ubiquitin-protein ligase RNF43 (784 aa).

Residues 1–23 (MSGGHQLQLAVLWPWLLMATLHA) form the signal peptide. At 24 to 197 (GFGHTGRVLA…LKEPPAGANY (174 aa)) the chain is on the extracellular side. N-linked (GlcNAc...) asparagine glycans are attached at residues N62 and N92. A disulfide bridge connects residues C91 and C119. A helical membrane pass occupies residues 198 to 218 (DVWILLTVVGTVFVIILASVL). At 219 to 784 (RIRCRPHHSR…ELEELCEQAV (566 aa)) the chain is on the cytoplasmic side. The segment at 272 to 313 (CAICLEEFSEGQELRVISCLHEFHRTCVDPWLYQHRTCPLCM) adopts an RING-type; atypical zinc-finger fold. 3 disordered regions span residues 364–407 (TSVA…HLAV), 459–478 (ADGP…SSDS), and 516–671 (DLQG…SLPP). Residues 386 to 395 (RHQRLPRTSH) are compositionally biased toward basic residues. The span at 464–478 (SDSSSGPCHGSSSDS) shows a compositional bias: low complexity. Basic residues predominate over residues 548–568 (IHYHRHRHHHYKRQFQWHGRK). Positions 583-608 (SHTQLEPSLPDQQLITPNPTASSMLP) are enriched in polar residues. The segment covering 618-629 (EPAPGLAEASSP) has biased composition (low complexity).

Belongs to the ZNRF3 family. As to quaternary structure, interacts with AKAP8L, NONO and SFPQ. Interacts with FZD5. Identified in a complex composed of RNF43, LGR5 and RSPO1. Interacts with RSPO2. Interacts with LMBR1L. Post-translationally, autoubiquitinated. As to expression, expressed in crypt base columnar cells of small intestinal epithelium. Crypt base columnar cells are small cycling cells residing between the terminally differentiated Paneth cells at crypt bottoms. Colocalizes with Lgr5-positive stem cells.

Its subcellular location is the cell membrane. The protein localises to the endoplasmic reticulum membrane. The protein resides in the nucleus envelope. It catalyses the reaction S-ubiquitinyl-[E2 ubiquitin-conjugating enzyme]-L-cysteine + [acceptor protein]-L-lysine = [E2 ubiquitin-conjugating enzyme]-L-cysteine + N(6)-ubiquitinyl-[acceptor protein]-L-lysine.. The protein operates within protein modification; protein ubiquitination. In terms of biological role, E3 ubiquitin-protein ligase that acts as a negative regulator of the Wnt signaling pathway by mediating the ubiquitination, endocytosis and subsequent degradation of Wnt receptor complex components Frizzled. Acts on both canonical and non-canonical Wnt signaling pathway. Along with RSPO2 and ZNRF3, constitutes a master switch that governs limb specification. The polypeptide is E3 ubiquitin-protein ligase RNF43 (Rnf43) (Mus musculus (Mouse)).